The sequence spans 268 residues: 3-deoxy-manno-octulosonate cytidylyltransferase (268 aa).

It belongs to the KdsB family.

The protein localises to the cytoplasm. It carries out the reaction 3-deoxy-alpha-D-manno-oct-2-ulosonate + CTP = CMP-3-deoxy-beta-D-manno-octulosonate + diphosphate. It functions in the pathway nucleotide-sugar biosynthesis; CMP-3-deoxy-D-manno-octulosonate biosynthesis; CMP-3-deoxy-D-manno-octulosonate from 3-deoxy-D-manno-octulosonate and CTP: step 1/1. It participates in bacterial outer membrane biogenesis; lipopolysaccharide biosynthesis. Activates KDO (a required 8-carbon sugar) for incorporation into bacterial lipopolysaccharide in Gram-negative bacteria. This chain is 3-deoxy-manno-octulosonate cytidylyltransferase, found in Ralstonia pickettii (strain 12J).